Here is a 186-residue protein sequence, read N- to C-terminus: ATP synthase subunit delta (186 aa).

This sequence belongs to the ATPase delta chain family. In terms of assembly, F-type ATPases have 2 components, F(1) - the catalytic core - and F(0) - the membrane proton channel. F(1) has five subunits: alpha(3), beta(3), gamma(1), delta(1), epsilon(1). F(0) has three main subunits: a(1), b(2) and c(10-14). The alpha and beta chains form an alternating ring which encloses part of the gamma chain. F(1) is attached to F(0) by a central stalk formed by the gamma and epsilon chains, while a peripheral stalk is formed by the delta and b chains.

The protein localises to the cell inner membrane. In terms of biological role, f(1)F(0) ATP synthase produces ATP from ADP in the presence of a proton or sodium gradient. F-type ATPases consist of two structural domains, F(1) containing the extramembraneous catalytic core and F(0) containing the membrane proton channel, linked together by a central stalk and a peripheral stalk. During catalysis, ATP synthesis in the catalytic domain of F(1) is coupled via a rotary mechanism of the central stalk subunits to proton translocation. Functionally, this protein is part of the stalk that links CF(0) to CF(1). It either transmits conformational changes from CF(0) to CF(1) or is implicated in proton conduction. The sequence is that of ATP synthase subunit delta from Fuscovulum blasticum (Rhodobacter blasticus).